A 580-amino-acid chain; its full sequence is Tricyclene synthase TPS4, chloroplastic (580 aa).

The transit peptide at 1–41 (MLLNSSFISLPSFFKSQELGRTNLLIHRNGSPLLCYATNTN) directs the protein to the chloroplast. Arg-296, Asp-334, Asp-338, Arg-475, and Asn-478 together coordinate (2E)-geranyl diphosphate. Mg(2+)-binding residues include Asp-334 and Asp-338. The DDXXD motif signature appears at 334–338 (DDIYD). Residues Asn-478, Thr-482, and Glu-486 each coordinate Mg(2+).

This sequence belongs to the terpene synthase family. Tpsb subfamily. Mg(2+) serves as cofactor. Requires Mn(2+) as cofactor. As to expression, expressed in leaves.

The protein resides in the plastid. It localises to the chloroplast stroma. The catalysed reaction is (2E)-geranyl diphosphate = tricyclene + diphosphate. It carries out the reaction (2E)-geranyl diphosphate = (E)-beta-ocimene + diphosphate. Its pathway is secondary metabolite biosynthesis; terpenoid biosynthesis. In terms of biological role, promotes the emission of terpenes volatile organic compounds (VOC) in response to damage mediated by arthropod herbivores (e.g. Spodoptera exigua), probably to attract natural enemies of the herbivores. The chain is Tricyclene synthase TPS4, chloroplastic (TPS4) from Medicago truncatula (Barrel medic).